The primary structure comprises 244 residues: Small ribosomal subunit protein uS2 (244 aa).

This sequence belongs to the universal ribosomal protein uS2 family.

The protein is Small ribosomal subunit protein uS2 of Buchnera aphidicola subsp. Schizaphis graminum (strain Sg).